The primary structure comprises 120 residues: Putative defensin-like protein 179 (120 aa).

Positions 1 to 27 (MERTSTSLLFLLSLLIIFASAVNQIRA) are cleaved as a signal peptide. 7 disulfide bridges follow: Cys37-Cys56, Cys40-Cys63, Cys44-Cys65, Cys74-Cys120, Cys85-Cys105, Cys90-Cys114, and Cys94-Cys116.

The protein belongs to the DEFL family.

The protein localises to the secreted. In Arabidopsis thaliana (Mouse-ear cress), this protein is Putative defensin-like protein 179 (LCR57).